Here is a 66-residue protein sequence, read N- to C-terminus: Pancreatic polypeptide prohormone (66 aa).

Tyrosine 36 carries the post-translational modification Tyrosine amide. A propeptide spanning residues 60–66 is cleaved from the precursor; sequence ELSPMDV.

This sequence belongs to the NPY family.

It localises to the secreted. Hormone secreted by pancreatic cells that acts as a regulator of pancreatic and gastrointestinal functions probably by signaling through the G protein-coupled receptor NPY4R2. The sequence is that of Pancreatic polypeptide prohormone (PPY) from Felis catus (Cat).